The following is a 149-amino-acid chain: Urease accessory protein UreE (149 aa).

It belongs to the UreE family.

The protein localises to the cytoplasm. Functionally, involved in urease metallocenter assembly. Binds nickel. Probably functions as a nickel donor during metallocenter assembly. The sequence is that of Urease accessory protein UreE from Ureaplasma urealyticum serovar 10 (strain ATCC 33699 / Western).